The primary structure comprises 232 residues: Probable intron-encoded endonuclease aI3 (232 aa).

It belongs to the LAGLIDADG endonuclease family.

The protein resides in the mitochondrion. Functionally, mitochondrial DNA endonuclease involved in intron homing. This chain is Probable intron-encoded endonuclease aI3 (aI3), found in Dictyostelium discoideum (Social amoeba).